We begin with the raw amino-acid sequence, 116 residues long: Large ribosomal subunit protein bL20 (116 aa).

This sequence belongs to the bacterial ribosomal protein bL20 family.

Functionally, binds directly to 23S ribosomal RNA and is necessary for the in vitro assembly process of the 50S ribosomal subunit. It is not involved in the protein synthesizing functions of that subunit. This Bacteroides thetaiotaomicron (strain ATCC 29148 / DSM 2079 / JCM 5827 / CCUG 10774 / NCTC 10582 / VPI-5482 / E50) protein is Large ribosomal subunit protein bL20.